Here is a 146-residue protein sequence, read N- to C-terminus: MNKITNNDTIWIKPKTVEKKWYVIDAADRILGKVAVDVVKILRGKHKAYYTPHQDLGDNVIIINASKVKLTGKKYQQKLYYRHSRYPGGLYSDTFRTLSERKPCAPLEIAIKGMLPKGPLGRNLFRNLKVFSGSEHTLKAQNPIKL.

It belongs to the universal ribosomal protein uL13 family. Part of the 50S ribosomal subunit.

This protein is one of the early assembly proteins of the 50S ribosomal subunit, although it is not seen to bind rRNA by itself. It is important during the early stages of 50S assembly. In Borreliella burgdorferi (strain ATCC 35210 / DSM 4680 / CIP 102532 / B31) (Borrelia burgdorferi), this protein is Large ribosomal subunit protein uL13.